The sequence spans 439 residues: Magnesium-dependent glutamate N-prenyltransferase (439 aa).

Residues N322, T326, E330, and F337 each contribute to the Mg(2+) site.

It belongs to the terpene synthase family. Mg(2+) is required as a cofactor.

The enzyme catalyses dimethylallyl diphosphate + L-glutamate = prekainate + diphosphate. The protein operates within secondary metabolite biosynthesis. In terms of biological role, magnesium-dependent glutamate N-prenyltransferase: part of the gene cluster that mediates the biosynthesis of kainic acid (KA) and derivatives, natural products with neurochemical activity acting as ionotropic glutamate receptor (iGluR) agonists, thus being neurotoxins. Catalyzes the conversion of L-glutamic acid (L-Glu) to prekainic acid in the presence of dimethylallyl diphosphate (DMAPP). Can also use geranyl diphosphate (GPP) as substrate, thus leading to the formation of N-geranyl-L-glutamic acid (L-NGG). The chain is Magnesium-dependent glutamate N-prenyltransferase from Digenea simplex (Marine red alga).